We begin with the raw amino-acid sequence, 370 residues long: Flagellar P-ring protein (370 aa).

Residues 1–21 (MKYILIKLSIVMIFIINSASK) form the signal peptide.

This sequence belongs to the FlgI family. In terms of assembly, the basal body constitutes a major portion of the flagellar organelle and consists of four rings (L,P,S, and M) mounted on a central rod.

The protein resides in the bacterial flagellum basal body. Its function is as follows. Assembles around the rod to form the L-ring and probably protects the motor/basal body from shearing forces during rotation. In Wigglesworthia glossinidia brevipalpis, this protein is Flagellar P-ring protein.